We begin with the raw amino-acid sequence, 509 residues long: Maturase K (509 aa).

This sequence belongs to the intron maturase 2 family. MatK subfamily.

The protein resides in the plastid. It localises to the chloroplast. Functionally, usually encoded in the trnK tRNA gene intron. Probably assists in splicing its own and other chloroplast group II introns. In Clematis florida (Asian virgin's bower), this protein is Maturase K.